The chain runs to 166 residues: Large ribosomal subunit protein uL10 (166 aa).

Belongs to the universal ribosomal protein uL10 family. Part of the ribosomal stalk of the 50S ribosomal subunit. The N-terminus interacts with L11 and the large rRNA to form the base of the stalk. The C-terminus forms an elongated spine to which L12 dimers bind in a sequential fashion forming a multimeric L10(L12)X complex.

Forms part of the ribosomal stalk, playing a central role in the interaction of the ribosome with GTP-bound translation factors. This Pseudomonas fluorescens (strain SBW25) protein is Large ribosomal subunit protein uL10.